We begin with the raw amino-acid sequence, 764 residues long: Aconitate hydratase (764 aa).

75–77 (DSH) provides a ligand contact to substrate. Cys307, Cys372, and Cys375 together coordinate [4Fe-4S] cluster. Substrate contacts are provided by residues Arg405, Arg410, Arg568, and 648 to 649 (SR).

It belongs to the aconitase/IPM isomerase family. [4Fe-4S] cluster serves as cofactor.

The protein localises to the cytoplasm. It carries out the reaction citrate = D-threo-isocitrate. It participates in carbohydrate metabolism; glyoxylate and dicarboxylate metabolism. Catalyzes the isomerization of citrate to isocitrate via cis-aconitate. This chain is Aconitate hydratase (ACO), found in Cucumis melo var. conomon (Oriental pickling melon).